Consider the following 396-residue polypeptide: L-tyrosine/L-aspartate decarboxylase (396 aa).

Lys-245 carries the N6-(pyridoxal phosphate)lysine modification.

It belongs to the group II decarboxylase family. MfnA subfamily. In terms of assembly, homodimer. The cofactor is pyridoxal 5'-phosphate.

The catalysed reaction is L-tyrosine + H(+) = tyramine + CO2. It carries out the reaction L-aspartate + H(+) = beta-alanine + CO2. It functions in the pathway cofactor biosynthesis; methanofuran biosynthesis. Its pathway is cofactor biosynthesis; coenzyme A biosynthesis. With respect to regulation, inhibited by hydroxylamine and O-methylhydroxylamine. Functionally, catalyzes the decarboxylation of L-tyrosine to produce tyramine for methanofuran biosynthesis. Can also catalyze the decarboxylation of L-aspartate to produce beta-alanine for coenzyme A (CoA) biosynthesis. This Methanocaldococcus jannaschii (strain ATCC 43067 / DSM 2661 / JAL-1 / JCM 10045 / NBRC 100440) (Methanococcus jannaschii) protein is L-tyrosine/L-aspartate decarboxylase.